The chain runs to 456 residues: N(6)-adenosine-methyltransferase non-catalytic subunit METTL14 (456 aa).

The segment at 45-76 (AETRETCRASYDTSAPNAKRKYQDEGETDEDK) is disordered. Interaction with METTL3 regions lie at residues 135-136 (RD) and 237-238 (SG). The positively charged region required for RNA-binding stretch occupies residues 245-254 (RVCLRKWGYR). 2 interaction with METTL3 regions span residues 255 to 258 (RCED) and 278 to 287 (KAVFQRTKEH). The tract at residues 297 to 298 (KR) is positively charged region required for RNA-binding. Residues 308–312 (NVDID) are interaction with METTL3. The disordered stretch occupies residues 393–456 (ERLRPKSPPP…GAHRGGFPPR (64 aa)). Residue Ser-399 is modified to Phosphoserine. Over residues 409–423 (GGGAPRGGGRGGTSA) the composition is skewed to gly residues. Positions 425-440 (RGRERNRSNFRGERGG) are enriched in basic and acidic residues. Residues 441-450 (FRGGRGGAHR) are compositionally biased toward gly residues.

It belongs to the MT-A70-like family. In terms of assembly, heterodimer; heterodimerizes with METTL3 to form an antiparallel heterodimer that constitutes an active methyltransferase. Component of the WMM complex, a N6-methyltransferase complex composed of a catalytic subcomplex, named MAC, and of an associated subcomplex, named MACOM. The MAC subcomplex is composed of METTL3 and METTL14. The MACOM subcomplex is composed of WTAP, ZC3H13, CBLL1/HAKAI, VIRMA, and, in some cases of RBM15 (RBM15 or RBM15B).

It is found in the nucleus. In terms of biological role, the METTL3-METTL14 heterodimer forms a N6-methyltransferase complex that methylates adenosine residues at the N(6) position of some mRNAs and regulates the circadian clock, differentiation of embryonic stem cells and cortical neurogenesis. In the heterodimer formed with METTL3, METTL14 constitutes the RNA-binding scaffold that recognizes the substrate rather than the catalytic core. N6-methyladenosine (m6A), which takes place at the 5'-[AG]GAC-3' consensus sites of some mRNAs, plays a role in mRNA stability and processing. M6A acts as a key regulator of mRNA stability by promoting mRNA destabilization and degradation. In embryonic stem cells (ESCs), m6A methylation of mRNAs encoding key naive pluripotency-promoting transcripts results in transcript destabilization. M6A regulates spermatogonial differentiation and meiosis and is essential for male fertility and spermatogenesis. M6A also regulates cortical neurogenesis: m6A methylation of transcripts related to transcription factors, neural stem cells, the cell cycle and neuronal differentiation during brain development promotes their destabilization and decay, promoting differentiation of radial glial cells. This Bos taurus (Bovine) protein is N(6)-adenosine-methyltransferase non-catalytic subunit METTL14 (METTL14).